Here is a 356-residue protein sequence, read N- to C-terminus: Vanillin synthase, chloroplastic (356 aa).

Asparagine 122 carries N-linked (GlcNAc...) asparagine glycosylation. 2 disulfides stabilise this stretch: cysteine 159-cysteine 202 and cysteine 193-cysteine 235. Cysteine 162 is an active-site residue. N-linked (GlcNAc...) asparagine glycosylation is present at asparagine 251. A disulfide bridge connects residues cysteine 293 and cysteine 343. Active-site residues include histidine 302 and asparagine 322.

It belongs to the peptidase C1 family. Forms homodimers, homotrimers and homotetramers. In terms of tissue distribution, accumulates in the inner part of vanilla pods (at protein level). Expressed in single cells located a few cell layers from the inner epidermis.

The protein resides in the plastid. It is found in the chloroplast. The catalysed reaction is (E)-ferulate + H2O = vanillin + acetate. The enzyme catalyses 4-O-beta-D-glucosyl-trans-ferulate + H2O = 4-O-beta-D-glucosyl-vanillin + acetate. The protein operates within aromatic compound metabolism; phenylpropanoid biosynthesis. Involved in the biosynthesis of vanillin (4-hydroxy-3-methoxy-benzaldehyde) and derivative natural products, key components of vanilla pods flavor. Catalyzes the double carbon bond cleavage of ferulic acid to vanillin and of their respective glucosides via a coupled non-oxidative hydratase/lyase reaction. Inactive toward p-coumaric acid, caffeic acid and their glucosides derivatives. This is Vanillin synthase, chloroplastic from Vanilla planifolia (Vanilla).